Reading from the N-terminus, the 312-residue chain is Putative pyridoxal kinase BUD16 (312 aa).

Substrate is bound by residues Ser-9, Thr-44, and Tyr-122. Residues 183–184 (TS) and 211–223 (RVPF…TGVG) contribute to the ATP site. Asp-224 is a substrate binding site.

This sequence belongs to the pyridoxine kinase family. A divalent metal cation is required as a cofactor.

It localises to the cytoplasm. The protein resides in the nucleus. The enzyme catalyses pyridoxal + ATP = pyridoxal 5'-phosphate + ADP + H(+). Functionally, required for synthesis of pyridoxal-5-phosphate from vitamin B6. Important for bud site selection. The chain is Putative pyridoxal kinase BUD16 (BUD16) from Saccharomyces cerevisiae (strain ATCC 204508 / S288c) (Baker's yeast).